A 720-amino-acid chain; its full sequence is Polyribonucleotide nucleotidyltransferase (720 aa).

Mg(2+) contacts are provided by aspartate 487 and aspartate 493. In terms of domain architecture, KH spans proline 554 to isoleucine 613. Positions glycine 623 to lysine 691 constitute an S1 motif domain. The disordered stretch occupies residues glutamate 699 to glutamate 720. The segment covering leucine 701–glutamate 720 has biased composition (basic and acidic residues).

The protein belongs to the polyribonucleotide nucleotidyltransferase family. Mg(2+) serves as cofactor.

Its subcellular location is the cytoplasm. It catalyses the reaction RNA(n+1) + phosphate = RNA(n) + a ribonucleoside 5'-diphosphate. Functionally, involved in mRNA degradation. Catalyzes the phosphorolysis of single-stranded polyribonucleotides processively in the 3'- to 5'-direction. The protein is Polyribonucleotide nucleotidyltransferase of Bradyrhizobium diazoefficiens (strain JCM 10833 / BCRC 13528 / IAM 13628 / NBRC 14792 / USDA 110).